Consider the following 160-residue polypeptide: Nascent polypeptide-associated complex subunit alpha (160 aa).

An NAC-A/B domain is found at 10 to 75 (TKGEKKTREA…HSFDDIASRL (66 aa)). In terms of domain architecture, UBA spans 120-159 (VNPKDVEVVMKETKASREKVVETLIATKNDLVSAVLELTT).

This sequence belongs to the NAC-alpha family. In terms of assembly, part of the nascent polypeptide-associated complex (NAC), consisting of nacA and nacB.

Its subcellular location is the cytoplasm. It is found in the nucleus. Functionally, component of the nascent polypeptide-associated complex (NAC), a dynamic component of the ribosomal exit tunnel, protecting the emerging polypeptides from interaction with other cytoplasmic proteins to ensure appropriate nascent protein targeting. The NAC complex also promotes mitochondrial protein import by enhancing productive ribosome interactions with the outer mitochondrial membrane and blocks the inappropriate interaction of ribosomes translating non-secretory nascent polypeptides with translocation sites in the membrane of the endoplasmic reticulum. May also be involved in transcription regulation. The polypeptide is Nascent polypeptide-associated complex subunit alpha (nacA) (Dictyostelium discoideum (Social amoeba)).